Consider the following 477-residue polypeptide: Ribulose bisphosphate carboxylase large chain (477 aa).

Positions 1-2 are excised as a propeptide; it reads MS. Pro-3 carries the post-translational modification N-acetylproline. Lys-14 bears the N6,N6,N6-trimethyllysine mark. Positions 123 and 173 each coordinate substrate. Lys-175 serves as the catalytic Proton acceptor. Position 177 (Lys-177) interacts with substrate. Lys-201, Asp-203, and Glu-204 together coordinate Mg(2+). Residue Lys-201 is modified to N6-carboxylysine. Catalysis depends on His-294, which acts as the Proton acceptor. Positions 295, 327, and 379 each coordinate substrate.

Belongs to the RuBisCO large chain family. Type I subfamily. As to quaternary structure, heterohexadecamer of 8 large chains and 8 small chains; disulfide-linked. The disulfide link is formed within the large subunit homodimers. It depends on Mg(2+) as a cofactor. In terms of processing, the disulfide bond which can form in the large chain dimeric partners within the hexadecamer appears to be associated with oxidative stress and protein turnover.

The protein resides in the plastid. Its subcellular location is the chloroplast. The catalysed reaction is 2 (2R)-3-phosphoglycerate + 2 H(+) = D-ribulose 1,5-bisphosphate + CO2 + H2O. The enzyme catalyses D-ribulose 1,5-bisphosphate + O2 = 2-phosphoglycolate + (2R)-3-phosphoglycerate + 2 H(+). In terms of biological role, ruBisCO catalyzes two reactions: the carboxylation of D-ribulose 1,5-bisphosphate, the primary event in carbon dioxide fixation, as well as the oxidative fragmentation of the pentose substrate in the photorespiration process. Both reactions occur simultaneously and in competition at the same active site. In Cichorium intybus (Chicory), this protein is Ribulose bisphosphate carboxylase large chain.